A 345-amino-acid chain; its full sequence is Biotin synthase (345 aa).

A Radical SAM core domain is found at 59–286; sequence NEVQLSTLLS…TTMVRLSAGR (228 aa). Residues Cys-74, Cys-78, and Cys-81 each contribute to the [4Fe-4S] cluster site. [2Fe-2S] cluster-binding residues include Cys-118, Cys-149, Cys-209, and Arg-281.

The protein belongs to the radical SAM superfamily. Biotin synthase family. In terms of assembly, homodimer. [4Fe-4S] cluster is required as a cofactor. Requires [2Fe-2S] cluster as cofactor.

It carries out the reaction (4R,5S)-dethiobiotin + (sulfur carrier)-SH + 2 reduced [2Fe-2S]-[ferredoxin] + 2 S-adenosyl-L-methionine = (sulfur carrier)-H + biotin + 2 5'-deoxyadenosine + 2 L-methionine + 2 oxidized [2Fe-2S]-[ferredoxin]. Its pathway is cofactor biosynthesis; biotin biosynthesis; biotin from 7,8-diaminononanoate: step 2/2. Catalyzes the conversion of dethiobiotin (DTB) to biotin by the insertion of a sulfur atom into dethiobiotin via a radical-based mechanism. The protein is Biotin synthase of Leptothrix cholodnii (strain ATCC 51168 / LMG 8142 / SP-6) (Leptothrix discophora (strain SP-6)).